A 248-amino-acid chain; its full sequence is MEEGGSSHDAESSKKLGRGKIEIKRIENTTNRQVTFCKRRNGLLKKAYELSVLCDAEVALVIFSTRGRLYEYANNSVRGTIERYKKACSDAVNPPSVTEANTQYYQQEASKLRRQIRDIQNSNRHIVGESLGSLNFKELKNLEGRLEKGISRVRSKKNELLVAEIEYMQKREMELQHNNMYLRAKIAEGARLNPDQQESSVIQGTTVYESGVSSHDQSQHYNRNYIPVNLLEPNQQFSGQDQPPLQLV.

Residues 18-72 (RGKIEIKRIENTTNRQVTFCKRRNGLLKKAYELSVLCDAEVALVIFSTRGRLYEY) form the MADS-box domain. The K-box domain occupies 102 to 192 (TQYYQQEASK…RAKIAEGARL (91 aa)).

In terms of assembly, interacts with AGL15 and AGL16.

It is found in the nucleus. Functionally, probable transcription factor. Interacts genetically with TT16/AGL32 in a partially antagonistic manner during flower development. Is essential for the coordination of cell divisions in ovule, seed coat development and endosperm formation. This chain is Agamous-like MADS-box protein AGL1 (AGL1), found in Arabidopsis thaliana (Mouse-ear cress).